We begin with the raw amino-acid sequence, 346 residues long: D-alanine--D-alanine ligase (346 aa).

The 195-residue stretch at 133 to 327 folds into the ATP-grasp domain; sequence KLYAKSVGVK…ALADQISLEK (195 aa). Residue 159-211 participates in ATP binding; that stretch reads LSFPCIIKPARLGSSIGISIVKDEKDLEYAKDVGFEFDNDLVVEEFKNNIKEY. Mg(2+)-binding residues include aspartate 284, glutamate 296, and asparagine 298.

It belongs to the D-alanine--D-alanine ligase family. Requires Mg(2+) as cofactor. The cofactor is Mn(2+).

Its subcellular location is the cytoplasm. It catalyses the reaction 2 D-alanine + ATP = D-alanyl-D-alanine + ADP + phosphate + H(+). It participates in cell wall biogenesis; peptidoglycan biosynthesis. Cell wall formation. The protein is D-alanine--D-alanine ligase of Campylobacter jejuni subsp. jejuni serotype O:2 (strain ATCC 700819 / NCTC 11168).